The following is a 173-amino-acid chain: Photosystem I assembly protein Ycf3 (173 aa).

3 TPR repeats span residues 35–68 (AYVYYRDGLSAQNAGDYAEALENYEESLKLEESP), 72–105 (SETLKNMAIIYMSNGDEDLALDTYQRALDQNSNQ), and 120–153 (GRTAQEAGLQDEADRLFDRAADVWTQAVRLYPGG).

Belongs to the Ycf3 family.

The protein resides in the cellular thylakoid membrane. Functionally, essential for the assembly of the photosystem I (PSI) complex. May act as a chaperone-like factor to guide the assembly of the PSI subunits. The polypeptide is Photosystem I assembly protein Ycf3 (Prochlorococcus marinus (strain MIT 9313)).